We begin with the raw amino-acid sequence, 207 residues long: Small ribosomal subunit protein uS4 (207 aa).

The span at 29-38 (SDKAKFDSKP) shows a compositional bias: basic and acidic residues. Positions 29 to 54 (SDKAKFDSKPGQHGRTSGTRTSDYGL) are disordered. The segment covering 42–52 (GRTSGTRTSDY) has biased composition (polar residues). The S4 RNA-binding domain occupies 97-160 (SRLDNVVYRM…KKQTRIAEAL (64 aa)).

The protein belongs to the universal ribosomal protein uS4 family. Part of the 30S ribosomal subunit. Contacts protein S5. The interaction surface between S4 and S5 is involved in control of translational fidelity.

Its function is as follows. One of the primary rRNA binding proteins, it binds directly to 16S rRNA where it nucleates assembly of the body of the 30S subunit. Functionally, with S5 and S12 plays an important role in translational accuracy. The protein is Small ribosomal subunit protein uS4 of Polaromonas naphthalenivorans (strain CJ2).